We begin with the raw amino-acid sequence, 1329 residues long: Synergin gamma (1329 aa).

Positions M112 to S152 form a coiled coil. The segment at G175 to F211 is disordered. Over residues T197 to S209 the composition is skewed to low complexity. The 112-residue stretch at N393 to T504 folds into the EH domain. A DFXDF motif 1 motif is present at residues D555–F559. A Phosphoserine modification is found at S571. A compositionally biased stretch (polar residues) spans V578 to P594. Positions V578–L600 are disordered. K609 is modified (N6-acetyllysine). The segment at K614 to S878 is interaction with AP1G1. 2 disordered regions span residues G661–Q701 and A730–L753. S676 is modified (phosphoserine). The interaction with AP1G1, AP1G2 and GGA1 stretch occupies residues L761–E773. A DFXDF motif 2 motif is present at residues D785–F789. The tract at residues I797 to S835 is disordered. A compositionally biased stretch (basic and acidic residues) spans P801–G814. S815 bears the Phosphoserine mark. Residue K836 is modified to N6-acetyllysine. 2 positions are modified to phosphoserine: S844 and S864. Disordered regions lie at residues K856 to D922, H941 to F1042, and S1088 to S1113. Positions S864–S873 are enriched in basic and acidic residues. A DFXDF motif 3 motif is present at residues D867–F871. Low complexity predominate over residues S874–K883. Phosphoserine occurs at positions 904, 944, 947, 997, 1021, 1088, 1090, 1102, and 1113. Positions S944 to G955 are enriched in polar residues. Residues E1016–S1028 are compositionally biased toward polar residues. T1115 carries the phosphothreonine modification.

Self-associates. Interacts with GGA1 (via GAE domain). Interacts with GGA2 and GGA3. Interacts with AP1G1 (via GAE domain), a subunit of adapter protein complex AP-1. Interacts with AP1G2 (via GAE domain) a subunit of adapter protein complex AP-1. Component of the aftiphilin/p200/gamma-synergin complex, at least composed of AFTPH/aftiphilin, HEATR5B/p200a and SYNRG/gamma-synergin, which plays a role in the AP1G1/AP-1-mediated trafficking of transferrin from early to recycling endosomes. Within the complex interacts with AFTPH/aftiphilin and HEATR5B/p200a; the interactions are direct. Interacts (via EH domain) with SCAMP1. As to expression, detected in brain and liver (at protein level). Ubiquitously expressed.

The protein resides in the cytoplasm. It localises to the golgi apparatus. The protein localises to the trans-Golgi network membrane. It is found in the perinuclear region. Its subcellular location is the cytoplasmic vesicle. The protein resides in the clathrin-coated vesicle. Plays a role in endocytosis and/or membrane trafficking at the trans-Golgi network (TGN). May act by linking the adapter protein complex AP-1 to other proteins. Component of clathrin-coated vesicles. Component of the aftiphilin/p200/gamma-synergin complex, which plays roles in AP1G1/AP-1-mediated protein trafficking including the trafficking of transferrin from early to recycling endosomes, and the membrane trafficking of furin and the lysosomal enzyme cathepsin D between the trans-Golgi network (TGN) and endosomes. The sequence is that of Synergin gamma (Synrg) from Rattus norvegicus (Rat).